Here is a 370-residue protein sequence, read N- to C-terminus: MKVTILASAILALINGALALPANTPTLDVTLTQVDNTRIKATVKNTGNEKVTFVHLNFFQDAAPVKKVSLFRNATEVEFTGIKRRLLTEGLSDDALTTLAPGATFEDEFDVASTADLTEGGTVTIRTDGFVPITTDRKVSGYIPYQSNELEIEVDAAKAAAVPQAIKLLDRRTKVASCSGSRASALSTALRNAASLANAAASAASSGSSTRFQEYFKTTSSSTRNTVAARFRAVASEASSQSSGKTTYYCTDPYGYCDSNTLAYTLPSSNLIANCDIYYSYLPALTSSCHAQDQATTTLHEFTHAPAVYSPGTDDYAYGYRASTALSASQALLNADTYALFANGTPLLPLSTSTSKCSTLTMVIAVNLNC.

Positions 1 to 19 (MKVTILASAILALINGALA) are cleaved as a signal peptide. A propeptide spanning residues 20 to 172 (LPANTPTLDV…PQAIKLLDRR (153 aa)) is cleaved from the precursor. Intrachain disulfides connect Cys178–Cys250 and Cys257–Cys275. Residue His300 participates in Zn(2+) binding. Glu301 is a catalytic residue. Zn(2+) contacts are provided by His304 and Asp315.

It belongs to the peptidase M35 family. The cofactor is Zn(2+).

It localises to the secreted. The catalysed reaction is Preferential cleavage of bonds with hydrophobic residues in P1'. Also 3-Asn-|-Gln-4 and 8-Gly-|-Ser-9 bonds in insulin B chain.. Secreted metalloproteinase that allows assimilation of proteinaceous substrates. Shows high activities on basic nuclear substrates such as histone and protamine. May be involved in virulence. This chain is Neutral protease 2 homolog AFUB_070680, found in Aspergillus fumigatus (strain CBS 144.89 / FGSC A1163 / CEA10) (Neosartorya fumigata).